The following is a 124-amino-acid chain: Multifunctional methyltransferase subunit TRM112 homolog A (124 aa).

The 119-residue stretch at 2–120 folds into the TRM112 domain; that stretch reads RLITHNMLSC…NKGIPNMLLH (119 aa).

The protein belongs to the TRM112 family. Interacts with TRM9.

Functionally, acts as an activator of both rRNA/tRNA and protein methyltransferases. Required for TRM9 tRNA methyltransferase activity. Involved in the regulation of cell division progression during organ growth. Required for the expression of cell cycle-related genes, and the G2-M phase progression during organogenesis. This Arabidopsis thaliana (Mouse-ear cress) protein is Multifunctional methyltransferase subunit TRM112 homolog A.